The sequence spans 1097 residues: FHIP family protein GK23746 (1097 aa).

Residues 1–21 (MSWLRSSPLRQSLTRTTSSGN) show a composition bias toward polar residues. Positions 1 to 25 (MSWLRSSPLRQSLTRTTSSGNGIRP) are disordered. The residue at position 491 (serine 491) is a Phosphoserine. Disordered regions lie at residues 639–684 (DVSA…SGRR), 820–856 (NENSPLHQQQSLQHPHHLQPLPAPQQTGAGAQQRSAY), and 932–1042 (NNQQ…SEPV). Positions 641–654 (SASSGNGTGSVVVG) are enriched in low complexity. Serine 823 carries the post-translational modification Phosphoserine. Composition is skewed to low complexity over residues 824 to 852 (PLHQQQSLQHPHHLQPLPAPQQTGAGAQQ) and 932 to 948 (NNQQSSNQTHLNSSSSS). A compositionally biased stretch (polar residues) spans 949–962 (AVTTCETSLSTQPH). Residues 973–985 (TTSSTISTSSGTT) show a composition bias toward low complexity. Positions 986–995 (AGSGGGGGSG) are enriched in gly residues. 2 stretches are compositionally biased toward low complexity: residues 996-1006 (SNSSFSIGGST) and 1013-1022 (SNNTTNSSST).

This sequence belongs to the FHIP family.

This is FHIP family protein GK23746 from Drosophila willistoni (Fruit fly).